An 801-amino-acid chain; its full sequence is H(+)/Cl(-) exchange transporter 3 (801 aa).

Residues 1–125 (MESEQLFHRG…WEMTKSLYDA (125 aa)) lie on the Cytoplasmic side of the membrane. 3 consecutive short sequence motifs (di-leucine internalization motif; mediates targeting to late endosome and lysosome membranes) follow at residues 28–29 (LL), 46–47 (LL), and 71–75 (LLDLL). The chain crosses the membrane as a helical span at residues 126–163 (WSGWLVVTLTGLASGALAGLIDIAADWMTDLKEGICLS). The N-linked (GlcNAc...) asparagine glycan is linked to Asn-177. Residues 209-232 (MNYIMYIFWALSFAFLAVSLVKVF) traverse the membrane as a helical segment. The Selectivity filter part_1 signature appears at 238-242 (GSGIP). Ser-239 provides a ligand contact to chloride. Positions 241-248 (IPEIKTIL) form an intramembrane region, helical. 2 consecutive transmembrane segments (helical) span residues 258 to 276 (GKWT…VASG) and 282 to 301 (EGPL…YLFP). Positions 280-284 (GKEGP) match the Selectivity filter part_2 motif. 2 intramembrane regions (helical) span residues 313 to 325 (VLSA…VSVA) and 329 to 337 (PIGGVLFSL). The next 3 membrane-spanning stretches (helical) occupy residues 349–367 (LWRS…RSIN), 391–416 (FPFI…AWCR), and 423–443 (FGKY…VIAF). N-linked (GlcNAc...) asparagine glycosylation is found at Asn-451 and Asn-479. The chain crosses the membrane as a helical span at residues 500 to 520 (IWQLCLALIFKIIMTVFTFGI). Residues 525–529 (GLFIP) carry the Selectivity filter part_3 motif. Phe-527 contacts chloride. 2 consecutive intramembrane regions (helical) follow at residues 555 to 569 (GLYA…LGGV) and 573 to 584 (TVSLVVIVFELT). Residues 585–588 (GGLE) constitute an intramembrane region (note=Loop between two helices). A helical transmembrane segment spans residues 589-607 (YIVPLMAAVMTSKWVGDAF). Residues 608–801 (GREGIYEAHI…NQDPASIMFN (194 aa)) are Cytoplasmic-facing. Tyr-613 serves as a coordination point for chloride. CBS domains are found at residues 641 to 705 (MRPR…ARKK) and 738 to 795 (LDMS…NQDP). Residues 672 to 674 (YNG) and 779 to 782 (TKKD) contribute to the ATP site.

This sequence belongs to the chloride channel (TC 2.A.49) family. ClC-3/CLCN3 subfamily. In terms of assembly, monomer and homodimer. Forms heterodimers with CLCN4. In terms of processing, N-glycosylated.

The protein resides in the early endosome membrane. It is found in the late endosome membrane. The protein localises to the lysosome membrane. It localises to the cell membrane. In terms of biological role, strongly outwardly rectifying, electrogenic H(+)/Cl(-)exchanger which mediates the exchange of chloride ions against protons. The CLC channel family contains both chloride channels and proton-coupled anion transporters that exchange chloride or another anion for protons. The presence of conserved gating glutamate residues is typical for family members that function as antiporters. In Pongo abelii (Sumatran orangutan), this protein is H(+)/Cl(-) exchange transporter 3 (CLCN3).